The following is a 228-amino-acid chain: ATP-dependent dethiobiotin synthetase BioD (228 aa).

13–18 serves as a coordination point for ATP; that stretch reads DIGKTF. Thr17 is a Mg(2+) binding site. Residue Lys38 is part of the active site. Ser42 is a binding site for substrate. ATP contacts are provided by residues Asp55, 116–119, 179–180, and 208–210; these read EGSG, NK, and PKI. Mg(2+) contacts are provided by Asp55 and Glu116.

The protein belongs to the dethiobiotin synthetase family. As to quaternary structure, homodimer. The cofactor is Mg(2+).

The protein localises to the cytoplasm. It carries out the reaction (7R,8S)-7,8-diammoniononanoate + CO2 + ATP = (4R,5S)-dethiobiotin + ADP + phosphate + 3 H(+). It participates in cofactor biosynthesis; biotin biosynthesis; biotin from 7,8-diaminononanoate: step 1/2. Functionally, catalyzes a mechanistically unusual reaction, the ATP-dependent insertion of CO2 between the N7 and N8 nitrogen atoms of 7,8-diaminopelargonic acid (DAPA, also called 7,8-diammoniononanoate) to form a ureido ring. The sequence is that of ATP-dependent dethiobiotin synthetase BioD from Clostridium perfringens (strain 13 / Type A).